A 200-amino-acid polypeptide reads, in one-letter code: Protein-methionine-sulfoxide reductase heme-binding subunit MsrQ (200 aa).

5 consecutive transmembrane segments (helical) span residues 8–28 (ITWL…WLFY), 54–74 (LLLA…PLLI), 79–99 (LLGL…SLLE), 116–136 (PYLT…LTSF), and 153–173 (FIYL…KILS).

The protein belongs to the MsrQ family. Heterodimer of a catalytic subunit (MsrP) and a heme-binding subunit (MsrQ). FMN serves as cofactor. It depends on heme b as a cofactor.

Its subcellular location is the cell inner membrane. Its function is as follows. Part of the MsrPQ system that repairs oxidized periplasmic proteins containing methionine sulfoxide residues (Met-O), using respiratory chain electrons. Thus protects these proteins from oxidative-stress damage caused by reactive species of oxygen and chlorine generated by the host defense mechanisms. MsrPQ is essential for the maintenance of envelope integrity under bleach stress, rescuing a wide series of structurally unrelated periplasmic proteins from methionine oxidation. MsrQ provides electrons for reduction to the reductase catalytic subunit MsrP, using the quinone pool of the respiratory chain. The polypeptide is Protein-methionine-sulfoxide reductase heme-binding subunit MsrQ (Cronobacter sakazakii (strain ATCC BAA-894) (Enterobacter sakazakii)).